We begin with the raw amino-acid sequence, 805 residues long: Sucrose synthase (805 aa).

Residues 275-752 form a GT-B glycosyltransferase region; sequence MVFNVVILSP…GLKRIQEKYT (478 aa).

Belongs to the glycosyltransferase 1 family. Plant sucrose synthase subfamily.

It catalyses the reaction an NDP-alpha-D-glucose + D-fructose = a ribonucleoside 5'-diphosphate + sucrose + H(+). In terms of biological role, sucrose-cleaving enzyme that provides UDP-glucose and fructose for various metabolic pathways. This is Sucrose synthase from Solanum tuberosum (Potato).